Consider the following 280-residue polypeptide: MLIKAYAKINLSLDVIGKREDGYHLLKMIMQTIDLYDLLNITPIEKGIEIKCNKSYIPCDKRNLVYKAVELFASNYGIKSGVSIDIIKNIPVAAGLAGGSSDAAAVLKVMRDIYIPELEYKDLIKLGTSIGADVPYCMIGGTALCQGIGEKVTSISSFKNHILVLVKPFFGVSTAEVYKSLDISKIKIHPNTDILINAINSGSLLKVSKNMKNVLENVTLKKHPLLRKIKNELIDFGALGALMSGSGPSIFAFFDDMLKAQICYDKMKTKYKEVFITRTV.

Lys-8 is a catalytic residue. 91–101 (PVAAGLAGGSS) is a binding site for ATP. The active site involves Asp-133.

This sequence belongs to the GHMP kinase family. IspE subfamily.

The enzyme catalyses 4-CDP-2-C-methyl-D-erythritol + ATP = 4-CDP-2-C-methyl-D-erythritol 2-phosphate + ADP + H(+). The protein operates within isoprenoid biosynthesis; isopentenyl diphosphate biosynthesis via DXP pathway; isopentenyl diphosphate from 1-deoxy-D-xylulose 5-phosphate: step 3/6. Its function is as follows. Catalyzes the phosphorylation of the position 2 hydroxy group of 4-diphosphocytidyl-2C-methyl-D-erythritol. This is 4-diphosphocytidyl-2-C-methyl-D-erythritol kinase from Clostridium kluyveri (strain NBRC 12016).